The primary structure comprises 571 residues: Sulfite reductase [NADPH] hemoprotein beta-component (571 aa).

The [4Fe-4S] cluster site is built by C435, C441, C480, and C484. C484 serves as a coordination point for siroheme.

This sequence belongs to the nitrite and sulfite reductase 4Fe-4S domain family. As to quaternary structure, alpha(8)-beta(8). The alpha component is a flavoprotein, the beta component is a hemoprotein. The cofactor is siroheme. [4Fe-4S] cluster is required as a cofactor.

The catalysed reaction is hydrogen sulfide + 3 NADP(+) + 3 H2O = sulfite + 3 NADPH + 4 H(+). It functions in the pathway sulfur metabolism; hydrogen sulfide biosynthesis; hydrogen sulfide from sulfite (NADPH route): step 1/1. Its function is as follows. Component of the sulfite reductase complex that catalyzes the 6-electron reduction of sulfite to sulfide. This is one of several activities required for the biosynthesis of L-cysteine from sulfate. The chain is Sulfite reductase [NADPH] hemoprotein beta-component from Musicola paradisiaca (strain Ech703) (Dickeya paradisiaca).